Here is a 415-residue protein sequence, read N- to C-terminus: Serine hydroxymethyltransferase 1 (415 aa).

(6S)-5,6,7,8-tetrahydrofolate-binding positions include leucine 122 and 126–128; that span reads GHL. The residue at position 230 (lysine 230) is an N6-(pyridoxal phosphate)lysine.

This sequence belongs to the SHMT family. Homodimer. Pyridoxal 5'-phosphate is required as a cofactor.

The protein localises to the cytoplasm. The enzyme catalyses (6R)-5,10-methylene-5,6,7,8-tetrahydrofolate + glycine + H2O = (6S)-5,6,7,8-tetrahydrofolate + L-serine. The protein operates within one-carbon metabolism; tetrahydrofolate interconversion. It participates in amino-acid biosynthesis; glycine biosynthesis; glycine from L-serine: step 1/1. Catalyzes the reversible interconversion of serine and glycine with tetrahydrofolate (THF) serving as the one-carbon carrier. This reaction serves as the major source of one-carbon groups required for the biosynthesis of purines, thymidylate, methionine, and other important biomolecules. Also exhibits THF-independent aldolase activity toward beta-hydroxyamino acids, producing glycine and aldehydes, via a retro-aldol mechanism. The chain is Serine hydroxymethyltransferase 1 from Burkholderia thailandensis (strain ATCC 700388 / DSM 13276 / CCUG 48851 / CIP 106301 / E264).